The chain runs to 260 residues: Tryptophan synthase alpha chain (260 aa).

Active-site proton acceptor residues include glutamate 52 and aspartate 63.

It belongs to the TrpA family. Tetramer of two alpha and two beta chains.

The catalysed reaction is (1S,2R)-1-C-(indol-3-yl)glycerol 3-phosphate + L-serine = D-glyceraldehyde 3-phosphate + L-tryptophan + H2O. It participates in amino-acid biosynthesis; L-tryptophan biosynthesis; L-tryptophan from chorismate: step 5/5. The alpha subunit is responsible for the aldol cleavage of indoleglycerol phosphate to indole and glyceraldehyde 3-phosphate. This Streptococcus mutans serotype c (strain ATCC 700610 / UA159) protein is Tryptophan synthase alpha chain.